The sequence spans 322 residues: uncharacterized protein (322 aa).

Composition is skewed to basic residues over residues 1 to 16 and 43 to 61; these read MPGNSRRRGAVRKSGT and LRPHHPAAKRARAQPRRPV. Residues 1–69 are disordered; sequence MPGNSRRRGA…PVKRADETET (69 aa). S-adenosyl-L-methionine-binding residues include glycine 261, isoleucine 281, and leucine 290.

It belongs to the class IV-like SAM-binding methyltransferase superfamily. RNA methyltransferase TrmH family.

This is an uncharacterized protein from Mycobacterium tuberculosis (strain CDC 1551 / Oshkosh).